An 84-amino-acid chain; its full sequence is Metallothionein-like protein 2C (84 aa).

Belongs to the metallothionein superfamily. Type 15 family.

The protein resides in the cytoplasm. The protein localises to the cytosol. In terms of biological role, metallothioneins have a high content of cysteine residues that bind various heavy metals. Acts as a reactive oxygen species (ROS) scavenger in the cytosol. Possesses superoxide anion and hydroxyl radical scavenging activities in vitro. Plays a role during root development, lateral root initiation and seed embryo germination, possibly by regulating levels of cytokinin. This chain is Metallothionein-like protein 2C (MT2C), found in Oryza sativa subsp. indica (Rice).